We begin with the raw amino-acid sequence, 319 residues long: Pantothenate kinase (319 aa).

ATP is bound at residue G101 to S108.

This sequence belongs to the prokaryotic pantothenate kinase family.

It localises to the cytoplasm. The enzyme catalyses (R)-pantothenate + ATP = (R)-4'-phosphopantothenate + ADP + H(+). It participates in cofactor biosynthesis; coenzyme A biosynthesis; CoA from (R)-pantothenate: step 1/5. The protein is Pantothenate kinase of Clavibacter michiganensis subsp. michiganensis (strain NCPPB 382).